A 709-amino-acid polypeptide reads, in one-letter code: ATP-dependent zinc metalloprotease FtsH (709 aa).

Residues Met-1–Lys-25 are Cytoplasmic-facing. The chain crosses the membrane as a helical span at residues Ile-26–Pro-46. The Extracellular portion of the chain corresponds to Arg-47–Asp-171. Residues Val-172–Phe-192 form a helical membrane-spanning segment. The Cytoplasmic portion of the chain corresponds to Trp-193–Ser-709. An ATP-binding site is contributed by Gly-268–Thr-275. His-490 serves as a coordination point for Zn(2+). Residue Glu-491 is part of the active site. Positions 494 and 569 each coordinate Zn(2+). The disordered stretch occupies residues Ile-673 to Ser-709. The segment covering Gln-680–Ser-709 has biased composition (basic and acidic residues).

The protein in the central section; belongs to the AAA ATPase family. This sequence in the C-terminal section; belongs to the peptidase M41 family. In terms of assembly, homohexamer. Zn(2+) serves as cofactor.

Its subcellular location is the cell membrane. Functionally, acts as a processive, ATP-dependent zinc metallopeptidase for both cytoplasmic and membrane proteins. Plays a role in the quality control of integral membrane proteins. The polypeptide is ATP-dependent zinc metalloprotease FtsH (Mycoplasma pneumoniae (strain ATCC 29342 / M129 / Subtype 1) (Mycoplasmoides pneumoniae)).